The sequence spans 598 residues: Arginine--tRNA ligase (598 aa).

The 'HIGH' region motif lies at 140 to 150 (ANPTGPLHVGH).

Belongs to the class-I aminoacyl-tRNA synthetase family. In terms of assembly, monomer.

It is found in the cytoplasm. The enzyme catalyses tRNA(Arg) + L-arginine + ATP = L-arginyl-tRNA(Arg) + AMP + diphosphate. In Synechococcus sp. (strain JA-3-3Ab) (Cyanobacteria bacterium Yellowstone A-Prime), this protein is Arginine--tRNA ligase.